Reading from the N-terminus, the 443-residue chain is Diels-Alderase poxQ (443 aa).

Positions 1 to 23 are cleaved as a signal peptide; sequence MARIPLEFLSITLPVLLLAYCLA. N-linked (GlcNAc...) asparagine glycosylation is found at Asn78, Asn97, and Asn145.

The protein belongs to the Diels-Alderase family.

The protein operates within secondary metabolite biosynthesis. In terms of biological role, diels-Alderase; part of the gene cluster that mediates the biosynthesis of oxaleimides, cytotoxic compounds containing an unusual disubstituted succinimide moiety. The first step of the pathway is provided by the HR-PKS poxF that serves in a new mode of collaborative biosynthesis with the PKS-NRPS poxE, by providing the olefin containing amino acid substrate via the synthesis of an ACP-bound dec-4-enoate. The cytochrome P450 monooxygenase poxM-catalyzed oxidation at the alpha-position creates the enzyme-bound 2-hydroxydec-4-enoyl-ACP thioester, which may be prone to spontaneous hydrolysis to yield 2-hydroxydec-4-enoic acid due to increased electrophilicity of the carbonyl. 2-hydroxydec-4-enoic acid can then be further oxidized by poxM to yield the alpha-ketoacid 2-oxodec-4-enoicacid, which is reductively aminated by the aminotransferase poxL to yield (S,E)-2-aminodec-4-enoic acid. The Hybrid PKS-NRPS synthetase poxE then performs condensation between the octaketide product of its PKS modules and the amino group of (S,E)-2-aminodec-4-enoic acid which is activated and incorporated by the adenylation domain. The resulting aminoacyl product can be cyclized by the Diels-Alderase PoxQ and reductively released by the reductive (R) domain of poxE to yield an aldehyde intermediate. The released aldehyde is then substrate for a Knoevenagel condensation by the hydrolyase poxO followed by an oxidation at the 5-position of the pyrrolidone ring. The presence of the olefin from the amino acid building block allows for migration of the substituted allyl group to occur. This allylic transposition reaction takes place in a conjugate addition, semipinacol-like fashion to yield a succinimide intermediate. Iterative two-electron oxidations of the C7 methyl of the succinimide intermediate to the carboxylic acid can be catalyzed by one of two remaining cytochrome P450 monooxygenasess poxC or poxD to yield oxaleimide A. Subsequent oxidation yields the maleimide scaffold oxaleimide I. Both oxaleimide A and oxaleimide I can undergo oxidative modifications in the decalin ring to yield the series of products oxaleimides B to H. This Penicillium oxalicum protein is Diels-Alderase poxQ.